Here is a 466-residue protein sequence, read N- to C-terminus: MATYQTELDLFKNEVEQKQPNDFLQFAANYFTKRLEQQRTFVRNQESLALSKGIVLFPSTSKHDSVAASSASLSHGSSKANASQSGISSSGVDEDVLFKSPFVDRGPHSTHIVDHLDSTHSNTTASPAKASGGDAPGIFKGNFNVGTESQRKVNSSVDPMAPEPTATTHSFPRRSVVNPKPLPINFNAQRRTSVSGETLQPDHLDDWKPENFQEKSPEQVSRLEKAVGKNFLFNKLDSDSKKLVINSLEEKSIPQGKEIIKQGDEGDYFYIVEDGTVEFYVNNQKVNTSGPGSSFGELALMYNSPRAATVIASTDCILWALDRLTFRRILLGGSFKKRILYDDLLKNIPILKSLSTYDRAKLADALDTEYYEAGQTIIKEGDTGENFYFIEYGEADVSQEGKGVITKLGKGDYFGEVALLNDLPRQATVTATARTKVATLGKSGFQRLLGPVVDVLKLNDPTRSKH.

Positions 25 to 231 are dimerization and phosphorylation; the sequence is QFAANYFTKR…RLEKAVGKNF (207 aa). The span at 71–80 shows a compositional bias: low complexity; sequence ASLSHGSSKA. 4 disordered regions span residues 71 to 90, 109 to 139, 154 to 179, and 193 to 218; these read ASLS…ISSS, STHI…PGIF, NSSV…VVNP, and SVSG…KSPE. The span at 81–90 shows a compositional bias: polar residues; it reads NASQSGISSS. A compositionally biased stretch (basic and acidic residues) spans 109 to 118; the sequence is STHIVDHLDS. S193 carries the phosphoserine modification. Positions 200–218 are enriched in basic and acidic residues; that stretch reads QPDHLDDWKPENFQEKSPE. 3',5'-cyclic AMP is bound by residues 232–347, E297, R306, 350–466, E416, and R425; these read LFNK…LLKN and ILKS…RSKH.

Belongs to the cAMP-dependent kinase regulatory chain family. Tetramer, composed of 2 regulatory (R) and 2 catalytic (C) subunits. In the presence of cAMP it dissociates into 2 active monomeric C subunits and an R dimer.

This chain is cAMP-dependent protein kinase regulatory subunit (PKAR), found in Kluyveromyces lactis (strain ATCC 8585 / CBS 2359 / DSM 70799 / NBRC 1267 / NRRL Y-1140 / WM37) (Yeast).